The following is a 1020-amino-acid chain: Calcium-transporting ATPase 1 (1020 aa).

At methionine 1 the chain carries N-acetylmethionine. Residues 1–162 (MESYLNENFG…NQFTESPSRG (162 aa)) are Stromal-facing. Positions 21-32 (ALQRWRKLCWIV) are interaction with calmodulin. Position 46 is a phosphoserine; by CPK (serine 46). The chain crosses the membrane as a helical span at residues 163 to 183 (FWLFVWEALQDTTLMILAACA). The Lumenal portion of the chain corresponds to 184–201 (FVSLIVGILMEGWPIGAH). A helical membrane pass occupies residues 202-222 (DGLGIVASILLVVFVTATSDY). Topologically, residues 223–350 (RQSLQFKDLD…DDETPLQVKL (128 aa)) are stromal. Residues 351–370 (NGVATIIGKIGLFFAVITFA) traverse the membrane as a helical segment. The Lumenal portion of the chain corresponds to 371 to 400 (VLVQGLANQKRLDNSHWIWTADELMAMLEY). Residues 401–418 (FAVAVTIVVVAVPEGLPL) traverse the membrane as a helical segment. At 419–813 (AVTLSLAFAM…KWGRSVYINI (395 aa)) the chain is on the stromal side. Aspartate 456 (4-aspartylphosphate intermediate) is an active-site residue. The Mg(2+) site is built by aspartate 758 and aspartate 762. Residues 814–832 (QKFVQFQLTVNVVALIVNF) form a helical membrane-spanning segment. Topologically, residues 833 to 843 (LSACLTGNAPL) are lumenal. The helical transmembrane segment at 844-864 (TAVQLLWVNMIMDTLGALALA) threads the bilayer. Over 865 to 884 (TEPPQDDLMKRSPVGRKGNF) the chain is Stromal. The helical transmembrane segment at 885 to 907 (ISNVMWRNILGQSLYQLVIIWCL) threads the bilayer. Residues 908–919 (QTKGKTMFGLDG) are Lumenal-facing. A helical transmembrane segment spans residues 920–941 (PDSDLTLNTLIFNIFVFCQVFN). The Stromal segment spans residues 942 to 959 (EISSREMEKIDVFKGILK). The chain crosses the membrane as a helical span at residues 960-981 (NYVFVAVLTCTVVFQVIIIELL). At 982-991 (GTFADTTPLN) the chain is on the lumenal side. A helical transmembrane segment spans residues 992–1013 (LGQWLVSIILGFLGMPVAAALK). Topologically, residues 1014–1020 (MIPVGSH) are stromal.

The protein belongs to the cation transport ATPase (P-type) (TC 3.A.3) family. Type IIB subfamily. As to expression, expressed at higher levels in roots than in leaves.

It localises to the plastid. The protein resides in the chloroplast inner membrane. It catalyses the reaction Ca(2+)(in) + ATP + H2O = Ca(2+)(out) + ADP + phosphate + H(+). Its activity is regulated as follows. Activated by calmodulin. In terms of biological role, this magnesium-dependent enzyme catalyzes the hydrolysis of ATP coupled with the translocation of calcium from the cytosol out of the cell or into organelles. This Arabidopsis thaliana (Mouse-ear cress) protein is Calcium-transporting ATPase 1 (ACA1).